A 605-amino-acid polypeptide reads, in one-letter code: Ubiquitin carboxyl-terminal hydrolase 2 (605 aa).

Residues 1-200 (MSQLSSTLKR…CPEYLVDYLE (200 aa)) form a necessary for interaction with MDM4 region. Disordered regions lie at residues 71-107 (LLDYDRGRPLLRPDITGGGKRAESQTRGTERPLGSGL) and 237-264 (WETGKGQAPGPSRSSSPGRDGMNSKSAQ). The segment covering 90-100 (KRAESQTRGTE) has biased composition (basic and acidic residues). Low complexity predominate over residues 245-255 (PGPSRSSSPGR). Residues 267 to 599 (AGLRNLGNTC…DAYLLFYELA (333 aa)) enclose the USP domain. The Nucleophile role is filled by Cys-276. Residues 403-503 (YLEREDSRIG…FPKILVLHLK (101 aa)) form a necessary for interaction with MDM4 region. 4 residues coordinate Zn(2+): Cys-425, Cys-428, Cys-476, and Cys-479. Catalysis depends on His-557, which acts as the Proton acceptor.

The protein belongs to the peptidase C19 family. USP2 subfamily. Homooligomer. Found in trimeric complex with MDM2 and MDM4 and USP2. Interacts with CCND1; the interaction is direct and promotes its stabilization by antagonizing ubiquitin-dependent degradation. Interacts (via N-terminus and C-terminus) with MDM2. Interacts with MDM4. Interacts with PER1. Interacts with KCNQ1; counteracts the NEDD4L-specific down-regulation of I(Ks) and restore plasma membrane localization of KCNQ1. Isoform 4: Interacts with NHERF4 and CLTC. In terms of tissue distribution, expressed in mesangial cells of the kidney and in different types of glomerulonephritides (at protein level).

It is found in the cytoplasm. The protein localises to the perinuclear region. Its subcellular location is the nucleus. It localises to the membrane. It carries out the reaction Thiol-dependent hydrolysis of ester, thioester, amide, peptide and isopeptide bonds formed by the C-terminal Gly of ubiquitin (a 76-residue protein attached to proteins as an intracellular targeting signal).. Cleavage is inhibited by ubiquitin in a dosage-dependent manner. Cleavage is blocked by ubiquitin aldehyde. Its function is as follows. Hydrolase that deubiquitinates polyubiquitinated target proteins such as MDM2, MDM4 and CCND1. Isoform 1 and isoform 4 possess both ubiquitin-specific peptidase and isopeptidase activities. Deubiquitinates MDM2 without reversing MDM2-mediated p53/TP53 ubiquitination and thus indirectly promotes p53/TP53 degradation and limits p53 activity. Has no deubiquitinase activity against p53/TP53. Prevents MDM2-mediated degradation of MDM4. Plays a role in the G1/S cell-cycle progression in normal and cancer cells. Regulates the circadian clock by modulating its intrinsic circadian rhythm and its capacity to respond to external cues. Associates with clock proteins and deubiquitinates core clock component PER1 but does not affect its overall stability. Regulates the nucleocytoplasmic shuttling and nuclear retention of PER1 and its repressive role on the clock transcription factors CLOCK and BMAL1. Plays a role in the regulation of myogenic differentiation of embryonic muscle cells. In terms of biological role, circadian clock output effector that regulates Ca(2+) absorption in the small intestine. Probably functions by regulating protein levels of the membrane scaffold protein NHERF4 in a rhythmic manner, and is therefore likely to control Ca(2+) membrane permeability mediated by the Ca(2+) channel TRPV6 in the intestine. This Homo sapiens (Human) protein is Ubiquitin carboxyl-terminal hydrolase 2 (USP2).